The chain runs to 359 residues: Phosphoserine aminotransferase (359 aa).

Arg-41 provides a ligand contact to L-glutamate. Pyridoxal 5'-phosphate is bound by residues 75–76 (AS), Trp-101, Thr-152, Asp-171, and Gln-194. Lys-195 is subject to N6-(pyridoxal phosphate)lysine. Pyridoxal 5'-phosphate is bound at residue 236–237 (NT).

The protein belongs to the class-V pyridoxal-phosphate-dependent aminotransferase family. SerC subfamily. Homodimer. Pyridoxal 5'-phosphate is required as a cofactor.

The protein resides in the cytoplasm. The catalysed reaction is O-phospho-L-serine + 2-oxoglutarate = 3-phosphooxypyruvate + L-glutamate. It catalyses the reaction 4-(phosphooxy)-L-threonine + 2-oxoglutarate = (R)-3-hydroxy-2-oxo-4-phosphooxybutanoate + L-glutamate. Its pathway is amino-acid biosynthesis; L-serine biosynthesis; L-serine from 3-phospho-D-glycerate: step 2/3. The protein operates within cofactor biosynthesis; pyridoxine 5'-phosphate biosynthesis; pyridoxine 5'-phosphate from D-erythrose 4-phosphate: step 3/5. In terms of biological role, catalyzes the reversible conversion of 3-phosphohydroxypyruvate to phosphoserine and of 3-hydroxy-2-oxo-4-phosphonooxybutanoate to phosphohydroxythreonine. The chain is Phosphoserine aminotransferase from Acinetobacter baylyi (strain ATCC 33305 / BD413 / ADP1).